Here is a 197-residue protein sequence, read N- to C-terminus: Lactoylglutathione lyase-like protein terB (197 aa).

Residues methionine 1–glycine 19 form the signal peptide. Asparagine 82, asparagine 99, and asparagine 140 each carry an N-linked (GlcNAc...) asparagine glycan.

It belongs to the glyoxalase I family.

Its function is as follows. Lactoylglutathione lyase-like protein; part of the gene cluster that mediates the biosynthesis of terrein, a fungal metabolite with ecological, antimicrobial, antiproliferative, and antioxidative activities. The first step in the pathway is performed by the polyketide synthase terA that produces 4-hydroxy-6-methylpyranon (4-HMP), orsellinic acid (OA), and 2,3-dehydro-6-hydroxymellein (2,3-dehydro-6-HM) by condensing acetyl-CoA with two, three, or four malonyl-CoA units, respectively. 4-HMP and OA are not pathway intermediates, but are rather shunt or side products. 2,3-dehydro-6-HM is further converted to 6-hydroxymellein (6-HM) by the 6-hydroxymellein synthase terB. The monooxygenases terC and terD, the multicopper oxidase terE and the Kelch-like protein terF are then involved in the transformation of 6-HM to terrein. Even if they are co-regulated with the other terrein cluster genes, terH and terI seem to be dispensable for terrein production; whereas one or both of the 2 transporters terG and terJ are probably required for efficient secretion of metabolites. This is Lactoylglutathione lyase-like protein terB from Aspergillus terreus (strain NIH 2624 / FGSC A1156).